The sequence spans 450 residues: 23S rRNA (uracil(1939)-C(5))-methyltransferase RlmD (450 aa).

In terms of domain architecture, TRAM spans 1-62 (MPVAGPLEIV…PSYEQATLVD (62 aa)). [4Fe-4S] cluster is bound by residues Cys-75, Cys-81, Cys-84, and Cys-163. Gln-271, Phe-300, Asn-305, Glu-321, Asn-349, and Asp-370 together coordinate S-adenosyl-L-methionine. Cys-406 acts as the Nucleophile in catalysis.

The protein belongs to the class I-like SAM-binding methyltransferase superfamily. RNA M5U methyltransferase family. RlmD subfamily.

It catalyses the reaction uridine(1939) in 23S rRNA + S-adenosyl-L-methionine = 5-methyluridine(1939) in 23S rRNA + S-adenosyl-L-homocysteine + H(+). Catalyzes the formation of 5-methyl-uridine at position 1939 (m5U1939) in 23S rRNA. This is 23S rRNA (uracil(1939)-C(5))-methyltransferase RlmD from Ralstonia nicotianae (strain ATCC BAA-1114 / GMI1000) (Ralstonia solanacearum).